A 1480-amino-acid polypeptide reads, in one-letter code: MVALMDKIAQLFRNKQYSDLIQLIDKQLHAKNEPEALIFLYAIQGEISFKQKDWIQAFAAYEKAVAESKQKGLPTQVYAQIVQRQMIILLRLQMLDTAFGLFSENQSVSVDNVQVLAQLALLYLMCERYSEAEKLLSSIVESSTSNTITLSKQFKEDIGPFKELFGVLDTYDTFLATILNNLAICNSKLGNHTLAFDQFQQALDIIKDPEKITRPPLSPITVLFDNCVSTVDEDKEKALKVEHHMLTINESKENQEDDTVLSLLRDGCTLIPSSTLGTHLPLIIELHSTICYNIGKLELTLGNLDRSVNHFKKSIEYQPSFARYVALGLVYRDMRNFYDAAEMLTKAVDSCVGISNLCLGEVVYNLGILVSEELKMPYKSLQFFDEATVLFIRGEFSAGAILSRIMKANSLTTITTATAVSSDWEFIMAFLNTLYLDLCAFSKDQGFNVEAAFTGTNAISFNLPITEPQEKESPKSDKIASEKPLVESNPGRSRTPSSMNDVYMLSAENLSFSLLESSFAQKETITSRLFPTFQAETKRYLAILYTNLGLIYYRIGIPTYYKQARRCFEVAIWFDNDCVFAINYLSVLLLKENSKTLAIEGLLKCTRLFPEYYEPFYNLGNILKADEENKKALQYYSRAIELNPRFLDGYLARGVLYAELHRFETAYLDFSKCIELDPDNRHAFCNYIHMKQILGIFHNDTLDMRKISKIIDDYIHEYLTVQNAINKGVVLPSHPLPPIMPYHCYLYRLSSSQLRFICQRYSEQNVNWVKQNIDMMSTPLLDLSIHQRPMPPSIGLINSVSSSSQLQLSMLPLNQSAADSMVPLAMLTPGPTLCTAIGFQSIKSVIRDSQHITHGPIFSYDRALITLARSKHSSKCPISYIDIVNLKSPLRLGVLCDDINSIPIGCILESWLRNIDPKVASLSIYSTVASDKSALRTSLEAHCSNFIDFTNYKYQNNPFLCAQRINGDGICIMISMCQHNCGLEGRILAMRPAPIQISYWTHGGTTNSNYLDYILADQYCIPPGYAHLYSEHVITMPGCFICPSHSMHYSNAILLEEHADILKVTVEEVRSLIQDSKPDIDVNHHSAAGENILSLDGSDATSSSVDSGIGSRTHSEAPIGGGDKDEGAHSSKILELELELAEIAKMKGETKNGVSTNSASEGRDELLMNDRILITGDNVFFQVQPIRNGRLVGGRDRSMIKKMEPLLKAIYPLQRIASEAAVPASMEKSENNSDLTSHRVCLELPLYRKNIRALYGIPANCFLFCTFNQVYKFDMGTLGIIAALLRSVPNAYYALLKFPPASQLHIEAFFRHKAPDILDRVIFLSMLPMKVEHIRRYLAVDVFVDTLKCNGSTIVLDALWSGVPVVGFVGEYILSRKTLSFLSVLECKDLICASQGEAVLLCTRLAVDSGYYFSVRKRILKNRSNLFNISRWCDNFVLTMMLAYKNWIFGGKPTSFSTERVIANVKSQGFSWPLKSTGAQ.

TPR repeat units follow at residues 38-71, 113-146, 176-209, and 288-321; these read IFLY…SKQK, VQVL…STSN, ATIL…IKDP, and STIC…QPSF. The span at 468–485 shows a compositional bias: basic and acidic residues; it reads PQEKESPKSDKIASEKPL. Positions 468–497 are disordered; that stretch reads PQEKESPKSDKIASEKPLVESNPGRSRTPS. TPR repeat units lie at residues 613–646 and 648–680; these read YEPF…NPRF and DGYL…DPDN. Positions 1093–1128 are disordered; the sequence is LSLDGSDATSSSVDSGIGSRTHSEAPIGGGDKDEGA. Residues 1099–1112 are compositionally biased toward polar residues; that stretch reads DATSSSVDSGIGSR. Residues glutamine 1269, lysine 1272, 1333-1336, 1351-1353, and aspartate 1357 contribute to the UDP site; these read HIRR and GST.

The protein belongs to the glycosyltransferase 41 family. O-GlcNAc transferase subfamily.

It localises to the cytoplasm. It is found in the nucleus. The enzyme catalyses L-seryl-[protein] + UDP-N-acetyl-alpha-D-glucosamine = 3-O-(N-acetyl-beta-D-glucosaminyl)-L-seryl-[protein] + UDP + H(+). It carries out the reaction L-threonyl-[protein] + UDP-N-acetyl-alpha-D-glucosamine = 3-O-(N-acetyl-beta-D-glucosaminyl)-L-threonyl-[protein] + UDP + H(+). It functions in the pathway protein modification; protein glycosylation. Its function is as follows. Catalyzes the transfer of a single N-acetylglucosamine from UDP-GlcNAc to a serine or threonine residue in cytoplasmic and nuclear proteins resulting in their modification with a beta-linked N-acetylglucosamine (O-GlcNAc). The protein is UDP-N-acetylglucosamine--peptide N-acetylglucosaminyltransferase of Giardia intestinalis (strain ATCC 50803 / WB clone C6) (Giardia lamblia).